Here is a 258-residue protein sequence, read N- to C-terminus: NAD kinase (258 aa).

The active-site Proton acceptor is Asp51. Residues 51-52, Lys56, 119-120, Lys130, Asp149, 160-165, and Ala184 each bind NAD(+); these read DG, ND, and TAYSLS.

This sequence belongs to the NAD kinase family. It depends on a divalent metal cation as a cofactor.

It is found in the cytoplasm. The catalysed reaction is NAD(+) + ATP = ADP + NADP(+) + H(+). Involved in the regulation of the intracellular balance of NAD and NADP, and is a key enzyme in the biosynthesis of NADP. Catalyzes specifically the phosphorylation on 2'-hydroxyl of the adenosine moiety of NAD to yield NADP. This is NAD kinase from Thermotoga petrophila (strain ATCC BAA-488 / DSM 13995 / JCM 10881 / RKU-1).